The sequence spans 78 residues: DNA-directed RNA polymerase subunit omega (78 aa).

The protein belongs to the RNA polymerase subunit omega family. As to quaternary structure, in cyanobacteria the RNAP catalytic core is composed of 2 alpha, 1 beta, 1 beta', 1 gamma and 1 omega subunit. When a sigma factor is associated with the core the holoenzyme is formed, which can initiate transcription.

The enzyme catalyses RNA(n) + a ribonucleoside 5'-triphosphate = RNA(n+1) + diphosphate. Its function is as follows. Promotes RNA polymerase assembly. Latches the N- and C-terminal regions of the beta' subunit thereby facilitating its interaction with the beta and alpha subunits. This chain is DNA-directed RNA polymerase subunit omega, found in Prochlorococcus marinus (strain AS9601).